A 353-amino-acid polypeptide reads, in one-letter code: UPF0283 membrane protein YcjF (353 aa).

The next 3 membrane-spanning stretches (helical) occupy residues 70 to 90 (MVMGGLALFGASVVGQGVQWT), 100 to 120 (VALGGCAAGALIIGAGVGSVV), and 213 to 233 (ESTLMIAVSPLALVDMAFIAW).

This sequence belongs to the UPF0283 family.

The protein localises to the cell inner membrane. In Escherichia coli O139:H28 (strain E24377A / ETEC), this protein is UPF0283 membrane protein YcjF.